A 454-amino-acid chain; its full sequence is UDP-N-acetylmuramoyl-tripeptide--D-alanyl-D-alanine ligase (454 aa).

Residue 116 to 122 (GSVGKTT) coordinates ATP.

Belongs to the MurCDEF family. MurF subfamily.

It localises to the cytoplasm. The enzyme catalyses D-alanyl-D-alanine + UDP-N-acetyl-alpha-D-muramoyl-L-alanyl-gamma-D-glutamyl-meso-2,6-diaminopimelate + ATP = UDP-N-acetyl-alpha-D-muramoyl-L-alanyl-gamma-D-glutamyl-meso-2,6-diaminopimeloyl-D-alanyl-D-alanine + ADP + phosphate + H(+). It participates in cell wall biogenesis; peptidoglycan biosynthesis. Functionally, involved in cell wall formation. Catalyzes the final step in the synthesis of UDP-N-acetylmuramoyl-pentapeptide, the precursor of murein. This chain is UDP-N-acetylmuramoyl-tripeptide--D-alanyl-D-alanine ligase, found in Synechocystis sp. (strain ATCC 27184 / PCC 6803 / Kazusa).